The sequence spans 558 residues: SPATS2-like protein (558 aa).

Alanine 2 carries the post-translational modification N-acetylalanine. Positions 63–79 are enriched in basic residues; it reads GKKKNNKRKRSKSKQHQ. Disordered regions lie at residues 63 to 148 and 161 to 202; these read GKKK…RGIT and DGNP…SNAP. 2 stretches are compositionally biased toward basic and acidic residues: residues 80–92 and 110–142; these read GNKD…ERPE and GCEK…EPPR. At serine 120 the chain carries Phosphoserine. The stretch at 279–344 forms a coiled coil; that stretch reads KEEAMDILTA…ARFSCDIEQL (66 aa). Residues 383 to 514 are disordered; the sequence is KQGNFSRKSS…SEKARRRQHA (132 aa). Residues 416–433 are compositionally biased toward polar residues; that stretch reads DACQQTMPTNKQQNGPSN. Serine 455 is subject to Phosphoserine. Residues 469 to 485 show a composition bias toward basic residues; the sequence is HEHRRQPHNGFRPKNKG.

Belongs to the SPATS2 family.

The protein resides in the cytoplasm. It localises to the nucleus. Its subcellular location is the nucleolus. This is SPATS2-like protein (Spats2l) from Rattus norvegicus (Rat).